A 428-amino-acid polypeptide reads, in one-letter code: Putative ankyrin repeat protein FPV234 (428 aa).

ANK repeat units follow at residues 6-35 (KDDILICEAIENYDSESLRNILENGADPNV), 39-68 (YQYSHLHNAIEKKNGSAVSLLLKHGADPNI), 71-100 (FFTPPLHKAIKKGCVDIARSLLEYGAIVNL), 103-132 (YCLKPIHIAANRTESKIVKLLIEYGADINS), 137-169 (NGKYPIHYAMKVYDPFRLKIIKVLLDHGADINK), 174-202 (TNTSPLYETRFITDDLLDYIISRGANINI), 206-238 (MGRNILHEIILRNGYNDFSNILVLIDHGADINA), and 242-271 (EGNTPFMLHTINNNAIILANYIVSLYYLSY).

The protein is Putative ankyrin repeat protein FPV234 of Fowlpox virus (strain NVSL) (FPV).